Reading from the N-terminus, the 690-residue chain is Elongation factor G (690 aa).

Residues 8-283 (SKCRNIGIMA…AVVDYLPSPN (276 aa)) enclose the tr-type G domain. GTP is bound by residues 17 to 24 (AHIDAGKT), 81 to 85 (DTPGH), and 135 to 138 (NKMD).

Belongs to the TRAFAC class translation factor GTPase superfamily. Classic translation factor GTPase family. EF-G/EF-2 subfamily.

Its subcellular location is the cytoplasm. Functionally, catalyzes the GTP-dependent ribosomal translocation step during translation elongation. During this step, the ribosome changes from the pre-translocational (PRE) to the post-translocational (POST) state as the newly formed A-site-bound peptidyl-tRNA and P-site-bound deacylated tRNA move to the P and E sites, respectively. Catalyzes the coordinated movement of the two tRNA molecules, the mRNA and conformational changes in the ribosome. The polypeptide is Elongation factor G (Anaplasma phagocytophilum (strain HZ)).